Reading from the N-terminus, the 522-residue chain is L-tyrosine/L-DOPA decarboxylase 2 (522 aa).

2 repeat units span residues 75-132 (KDVH…TELE) and 135-186 (VMDW…GREH). Residues 75-186 (KDVHDDIVPG…RILDRIGREH (112 aa)) form a 2 X approximate tandem repeats region. Residues Thr163, Cys164, Thr258, and Asn312 each coordinate pyridoxal 5'-phosphate. At Lys315 the chain carries N6-(pyridoxal phosphate)lysine.

It belongs to the group II decarboxylase family. It depends on pyridoxal 5'-phosphate as a cofactor. As to expression, strongly expressed in all tissues, particularly in thick roots.

It carries out the reaction L-tyrosine + H(+) = tyramine + CO2. It catalyses the reaction L-dopa + H(+) = dopamine + CO2. It functions in the pathway aromatic compound metabolism. The protein operates within alkaloid biosynthesis. Aromatic amino acid decarboxylase participating in the biosynthesis of natural products derived from phenylethylamine, including mescaline, a natural hallucinogen potentially used in psychotherapeutic treatments. Catalyzes the decarboxylation of L-tyrosine and L-DOPA. In Lophophora williamsii (Peyote), this protein is L-tyrosine/L-DOPA decarboxylase 2.